Reading from the N-terminus, the 573-residue chain is Estrogen receptor beta (573 aa).

Residues 15–170 (QEVDSSKVGE…CFAGKGDMHF (156 aa)) form a modulating region. 2 consecutive NR C4-type zinc fingers follow at residues 171–191 (CAVCHDYASGYHYGVWSCEGC) and 207–231 (CPATNQCTIDKNRRKSCQACRLRKC). Positions 171–236 (CAVCHDYASG…RLRKCYEVGM (66 aa)) form a DNA-binding region, nuclear receptor. Residues 291 to 527 (TPEQLINRII…DLLLEMLDAN (237 aa)) form the NR LBD domain. Low complexity-rich tracts occupy residues 534–552 (MSASYSSQPSPWSQAAQSQ) and 559–573 (CSGECPCPPKESSTI). A disordered region spans residues 534-573 (MSASYSSQPSPWSQAAQSQPGPPPSCSGECPCPPKESSTI).

This sequence belongs to the nuclear hormone receptor family. NR3 subfamily. Binds DNA as a homodimer. Can form a heterodimer with ER-alpha. In terms of tissue distribution, liver.

The protein resides in the nucleus. Its function is as follows. Binds estrogens with an affinity similar to that of ER-alpha, and activates expression of reporter genes containing estrogen response elements (ERE) in an estrogen-dependent manner. This Anguilla japonica (Japanese eel) protein is Estrogen receptor beta (esr2).